Reading from the N-terminus, the 333-residue chain is L-lactate dehydrogenase B chain (333 aa).

NAD(+) is bound by residues 29 to 57 (GQVGMACAISILGKRLGDELALVDVWEDK) and Arg-99. Arg-106, Asn-138, and Arg-169 together coordinate substrate. NAD(+) is bound at residue Asn-138. The Proton acceptor role is filled by His-193. Thr-248 contacts substrate.

This sequence belongs to the LDH/MDH superfamily. LDH family. As to quaternary structure, homotetramer.

It localises to the cytoplasm. It catalyses the reaction (S)-lactate + NAD(+) = pyruvate + NADH + H(+). It participates in fermentation; pyruvate fermentation to lactate; (S)-lactate from pyruvate: step 1/1. Its function is as follows. Interconverts simultaneously and stereospecifically pyruvate and lactate with concomitant interconversion of NADH and NAD(+). The chain is L-lactate dehydrogenase B chain (LDHB) from Alligator mississippiensis (American alligator).